A 595-amino-acid chain; its full sequence is Indole-3-acetic acid-amido synthetase GH3.15 (595 aa).

ATP contacts are provided by residues Ser-97–Ser-98, Thr-302, and Phe-325–Glu-330. Substrate contacts are provided by Phe-325 and Phe-332. The ATP site is built by Tyr-348 and Asp-408.

This sequence belongs to the IAA-amido conjugating enzyme family. In terms of tissue distribution, expressed in seedlings, roots, and parts of the siliques.

It catalyses the reaction (indol-3-yl)butanoate + L-cysteine + ATP = (indol-3-yl)butanoyl-L-cysteine + AMP + diphosphate + H(+). The enzyme catalyses (indol-3-yl)butanoate + L-glutamine + ATP = (indol-3-yl)butanoyl-L-glutamine + AMP + diphosphate + H(+). It carries out the reaction 4-(2,4-dichlorophenoxy)butanoate + L-glutamine + ATP = 4-(2,4-dichlorophenoxy)butanoyl-L-glutamine + AMP + diphosphate + H(+). Functionally, indole-3-acetic acid-amido (IAA) synthetase that catalyzes the conjugation of amino acids to auxin specifically using the auxin precursor indole-3-butyric acid (IBA) and glutamine and, possibly, cysteine as substrates. Displays high catalytic activity with the auxinic phenoxyalkanoic acid herbicides 4-(2,4-dichlorophenoxy)butyric acid (2,4-DB) and to some extent 2,4-dichlorophenoxylacetic acid (2,4-D) as substrates, thus conferring resistance to herbicides. In Arabidopsis thaliana (Mouse-ear cress), this protein is Indole-3-acetic acid-amido synthetase GH3.15.